Consider the following 266-residue polypeptide: Methylsterol monooxygenase 2-2 (266 aa).

3 helical membrane passes run 24 to 44 (IGSFLLHESVFFLSGLPFIFL), 71 to 91 (RLLLYHFSVNLPLMLASYPVF), and 107 to 127 (EVSAQILFYFIIEDFVFYWGH). The region spanning 113–247 (LFYFIIEDFV…FVYMDWIFGT (135 aa)) is the Fatty acid hydroxylase domain. The Histidine box-1 signature appears at 127–131 (HRILH). The Histidine box-2 signature appears at 140-144 (HSVHH). The helical transmembrane segment at 162–182 (ILFLGFATIVGPALTGPHLIT) threads the bilayer. The Histidine box-3 motif lies at 219-225 (FHDYHHR).

This sequence belongs to the sterol desaturase family. Requires Fe cation as cofactor. Expressed in shoots, roots, siliques and flowers, and, slightly, in developing seeds.

Its subcellular location is the endoplasmic reticulum membrane. It catalyses the reaction 4,4-dimethyl-5alpha-cholest-7-en-3beta-ol + 6 Fe(II)-[cytochrome b5] + 3 O2 + 5 H(+) = 4alpha-carboxy-4beta-methyl-5alpha-cholest-7-ene-3beta-ol + 6 Fe(III)-[cytochrome b5] + 4 H2O. The catalysed reaction is 24-methylidenelophenol + 6 Fe(II)-[cytochrome b5] + 3 O2 + 5 H(+) = 4alpha-carboxy-ergosta-7,24(24(1))-dien-3beta-ol + 6 Fe(III)-[cytochrome b5] + 4 H2O. Non-heme iron oxygenase involved in sterols biosynthesis by catalyzing the removal of the second methyl group at the C-4 position. 24-ethylidenelophenol and 24-ethyllophenol are the preferred substrates. Together with SMO2-1, required during embryogenesis, probably by maintaining sterols and auxin homeostasis. This is Methylsterol monooxygenase 2-2 from Arabidopsis thaliana (Mouse-ear cress).